The primary structure comprises 379 residues: Oxidoreductase chry3 (379 aa).

Disordered regions lie at residues 1–23 and 126–150; these read MTTA…QPTP and EGDD…TSHM. Residues 126 to 138 are compositionally biased toward acidic residues; it reads EGDDSAPAEEEAD.

The protein belongs to the asaB hydroxylase/desaturase family.

It functions in the pathway pigment biosynthesis. In terms of biological role, oxidoreductase; part of the gene cluster that mediates the biosynthesis of the yellow pigment chrysogine. Pyruvic acid and anthranilic acid are likely substrates for the nonribosomal peptide synthetase chry1/NRPS14, with pyruvic acid adenylated by the first A domain and anthranilic acid by the second. If pyruvic acid and anthranilic acid are merged and released from chry1/NRPS14 by hydrolysis, a subsequent amidation would lead to 2-pyruvoylaminobenzamide. This process is probably catalyzed by the amidotransferase chry2 using glutamine as amino donor. The dehydrogenase chry5 that has a terminal berberine bridge domain for C-N cyclization could catalyze the cyclization of 2-pyruvoylaminobenzamide to yield acetyl-4(3H)-quinazolidinone. A final reduction of acetyl-4(3H)-quinazolidinone catalyzed by the oxidoreductase chry4 would result in chrysogine. The sequence is that of Oxidoreductase chry3 from Gibberella zeae (strain ATCC MYA-4620 / CBS 123657 / FGSC 9075 / NRRL 31084 / PH-1) (Wheat head blight fungus).